The following is a 437-amino-acid chain: Ribosomal protein uS12 methylthiotransferase RimO (437 aa).

The MTTase N-terminal domain occupies 3-118; it reads KKFYITTLGC…AGKILREKFP (116 aa). 6 residues coordinate [4Fe-4S] cluster: Cys12, Cys48, Cys81, Cys157, Cys161, and Cys164. One can recognise a Radical SAM core domain in the interval 143–370; it reads NYSKPYAYVK…RDSHLEILEE (228 aa). In terms of domain architecture, TRAM spans 373 to 437; that stretch reads ESRIGRTYDA…YEYDMNGTWV (65 aa).

Belongs to the methylthiotransferase family. RimO subfamily. The cofactor is [4Fe-4S] cluster.

It is found in the cytoplasm. The enzyme catalyses L-aspartate(89)-[ribosomal protein uS12]-hydrogen + (sulfur carrier)-SH + AH2 + 2 S-adenosyl-L-methionine = 3-methylsulfanyl-L-aspartate(89)-[ribosomal protein uS12]-hydrogen + (sulfur carrier)-H + 5'-deoxyadenosine + L-methionine + A + S-adenosyl-L-homocysteine + 2 H(+). Catalyzes the methylthiolation of an aspartic acid residue of ribosomal protein uS12. The sequence is that of Ribosomal protein uS12 methylthiotransferase RimO from Leptospira interrogans serogroup Icterohaemorrhagiae serovar Lai (strain 56601).